A 318-amino-acid chain; its full sequence is Bis(5'-nucleosyl)-tetraphosphatase, symmetrical (318 aa).

A disordered region spans residues 269–318 (PGREVTGPAPVARAPRRPRERLGRQRSRGNRGNAGNTAVPAKPPVDTPQD). A compositionally biased stretch (basic residues) spans 282-297 (APRRPRERLGRQRSRG). Pro residues predominate over residues 309-318 (AKPPVDTPQD).

It belongs to the Ap4A hydrolase family.

The catalysed reaction is P(1),P(4)-bis(5'-adenosyl) tetraphosphate + H2O = 2 ADP + 2 H(+). Its function is as follows. Hydrolyzes diadenosine 5',5'''-P1,P4-tetraphosphate to yield ADP. The protein is Bis(5'-nucleosyl)-tetraphosphatase, symmetrical of Xanthomonas oryzae pv. oryzae (strain MAFF 311018).